Consider the following 159-residue polypeptide: Putative pre-16S rRNA nuclease (159 aa).

Belongs to the YqgF nuclease family.

It is found in the cytoplasm. Its function is as follows. Could be a nuclease involved in processing of the 5'-end of pre-16S rRNA. The polypeptide is Putative pre-16S rRNA nuclease (Agrobacterium fabrum (strain C58 / ATCC 33970) (Agrobacterium tumefaciens (strain C58))).